Here is a 325-residue protein sequence, read N- to C-terminus: ATP phosphoribosyltransferase (325 aa).

The protein belongs to the ATP phosphoribosyltransferase family. Long subfamily. Mg(2+) is required as a cofactor.

It localises to the cytoplasm. The enzyme catalyses 1-(5-phospho-beta-D-ribosyl)-ATP + diphosphate = 5-phospho-alpha-D-ribose 1-diphosphate + ATP. It functions in the pathway amino-acid biosynthesis; L-histidine biosynthesis; L-histidine from 5-phospho-alpha-D-ribose 1-diphosphate: step 1/9. With respect to regulation, feedback inhibited by histidine. Functionally, catalyzes the condensation of ATP and 5-phosphoribose 1-diphosphate to form N'-(5'-phosphoribosyl)-ATP (PR-ATP). Has a crucial role in the pathway because the rate of histidine biosynthesis seems to be controlled primarily by regulation of HisG enzymatic activity. In Bradyrhizobium sp. (strain ORS 278), this protein is ATP phosphoribosyltransferase.